The sequence spans 499 residues: Signal recognition particle subunit SRP54 2 (499 aa).

Residues 1 to 295 (MVLAELGGSI…DVKPFVSRLL (295 aa)) are G-domain. Residues 108-115 (GLQGSGKT), 190-194 (DTSGR), and 248-251 (TKMD) contribute to the GTP site. An M-domain region spans residues 296 to 499 (GMGDWSGFMD…MGGMFGGGDK (204 aa)).

The protein belongs to the GTP-binding SRP family. SRP54 subfamily. As to quaternary structure, component of a signal recognition particle (SRP) complex that consists of a 7SL RNA molecule of 300 nucleotides and six protein subunits: SRP72, SRP68, SRP54, SRP19, SRP14 and SRP9.

Its subcellular location is the cytoplasm. The protein resides in the endoplasmic reticulum. The catalysed reaction is GTP + H2O = GDP + phosphate + H(+). Component of the signal recognition particle (SRP) complex, a ribonucleoprotein complex that mediates the cotranslational targeting of secretory and membrane proteins to the endoplasmic reticulum (ER). As part of the SRP complex, associates with the SRP receptor (SR) component SRPRA to target secretory proteins to the endoplasmic reticulum membrane. Binds to the signal sequence of presecretory proteins when they emerge from the ribosomes. Displays basal GTPase activity, and stimulates reciprocal GTPase activation of the SR subunit SRPRA. Forms a guanosine 5'-triphosphate (GTP)-dependent complex with the SR subunit SRPRA. SR compaction and GTPase mediated rearrangement of SR drive SRP-mediated cotranslational protein translocation into the ER. Requires the presence of SRP9/SRP14 and/or SRP19 to stably interact with RNA. In Solanum lycopersicum (Tomato), this protein is Signal recognition particle subunit SRP54 2.